A 757-amino-acid chain; its full sequence is 5-methyltetrahydropteroyltriglutamate--homocysteine methyltransferase (757 aa).

Residues 16-19 (RELK) and Lys112 each bind 5-methyltetrahydropteroyltri-L-glutamate. L-homocysteine is bound by residues 433–435 (IGS) and Glu486. Residues 433–435 (IGS) and Glu486 contribute to the L-methionine site. Residues 517 to 518 (RC) and Trp563 each bind 5-methyltetrahydropteroyltri-L-glutamate. An L-homocysteine-binding site is contributed by Asp601. Asp601 lines the L-methionine pocket. Residue Glu607 participates in 5-methyltetrahydropteroyltri-L-glutamate binding. Residues His643, Cys645, and Glu667 each coordinate Zn(2+). His696 functions as the Proton donor in the catalytic mechanism. Zn(2+) is bound at residue Cys728.

The protein belongs to the vitamin-B12 independent methionine synthase family. Zn(2+) is required as a cofactor.

It carries out the reaction 5-methyltetrahydropteroyltri-L-glutamate + L-homocysteine = tetrahydropteroyltri-L-glutamate + L-methionine. Its pathway is amino-acid biosynthesis; L-methionine biosynthesis via de novo pathway; L-methionine from L-homocysteine (MetE route): step 1/1. Catalyzes the transfer of a methyl group from 5-methyltetrahydrofolate to homocysteine resulting in methionine formation. The sequence is that of 5-methyltetrahydropteroyltriglutamate--homocysteine methyltransferase from Histophilus somni (strain 2336) (Haemophilus somnus).